Consider the following 713-residue polypeptide: G-protein coupled receptor-associated protein LMBRD2 (713 aa).

Residues 1–3 (MSG) are Extracellular-facing. A helical membrane pass occupies residues 4–21 (VALGIEIVSVFFLALFLL). Over 22–32 (HRYGDFKKQHK) the chain is Cytoplasmic. The helical transmembrane segment at 33–53 (LVIVGTLLAWYLCFLIVFIIP) threads the bilayer. At 54 to 122 (LDVSTTIYNR…SKPWSYIPRG (69 aa)) the chain is on the extracellular side. N-linked (GlcNAc...) asparagine glycans are attached at residues Asn76 and Asn89. Residues 123–143 (IMPIFWRVVYWTSQFLTWILM) form a helical membrane-spanning segment. Topologically, residues 144 to 167 (PFMQSYARSGGFSITGKIKTALIE) are cytoplasmic. The helical transmembrane segment at 168–188 (NAIYYGTYLLIFGALLIYVAV) threads the bilayer. At 189–203 (NPNLHLEWYQLQTIG) the chain is on the extracellular side. The chain crosses the membrane as a helical span at residues 204–224 (IAAANTWGLFLLVLLMGYGLV). Over 225–404 (EIPRSQWNGA…ECLLRPWCSR (180 aa)) the chain is Cytoplasmic. A coiled-coil region spans residues 246 to 314 (KAAKLMTEKA…DDYEDFEEKN (69 aa)). Residues 405-425 (ILAVILALFSTVVVWSECTFF) form a helical membrane-spanning segment. Residues 426–449 (SAKPVLSLFAVFIQQAEQTHNYIY) are Extracellular-facing. The helical transmembrane segment at 450-470 (VEVVCFLSIFFLSICVYSTVF) threads the bilayer. Residues 471 to 490 (RIRVFNYYYLASHHQTDAYS) are Cytoplasmic-facing. The helical transmembrane segment at 491 to 511 (LLFSGMLFCRLTPPLCLNFLG) threads the bilayer. Residues 512-538 (LTHMDVSISHQNIEPTAYTSIMGSLRV) lie on the Extracellular side of the membrane. Residues 539-559 (LPLIADVFYIYYPMLVLILCI) traverse the membrane as a helical segment. The Cytoplasmic portion of the chain corresponds to 560–713 (ATYFSLGTRC…QSNSRIFDDV (154 aa)). Residues 587-620 (DLTDEGKELIKREKRKRQRLEDGETRRREWKERY) adopt a coiled-coil conformation. A disordered region spans residues 600 to 713 (KRKRQRLEDG…QSNSRIFDDV (114 aa)). Over residues 605–629 (RLEDGETRRREWKERYPTNREDTSR) the composition is skewed to basic and acidic residues. Residues 643-657 (TEMTTNRSSKYTRAS) are compositionally biased toward polar residues. The span at 658 to 667 (NRTERDRIEL) shows a compositional bias: basic and acidic residues. Positions 701–713 (SMSQSNSRIFDDV) are enriched in polar residues.

This sequence belongs to the LIMR family.

The protein localises to the cell membrane. Functionally, may associate with G-protein coupled receptors and regulate downstream signaling pathways. This is G-protein coupled receptor-associated protein LMBRD2 (lmbrd2) from Xenopus laevis (African clawed frog).